A 190-amino-acid chain; its full sequence is Mediator of RNA polymerase II transcription subunit 28 (190 aa).

Residues 76–108 are a coiled coil; the sequence is MLIKDENQDLSIEIQRKEALLQKHYNRLEEWKA.

Belongs to the Mediator complex subunit 28 family. Component of the Mediator complex.

The protein resides in the nucleus. Component of the Mediator complex, a coactivator involved in the regulated transcription of nearly all RNA polymerase II-dependent genes. Mediator functions as a bridge to convey information from gene-specific regulatory proteins to the basal RNA polymerase II transcription machinery. Mediator is recruited to promoters by direct interactions with regulatory proteins and serves as a scaffold for the assembly of a functional preinitiation complex with RNA polymerase II and the general transcription factors. This is Mediator of RNA polymerase II transcription subunit 28 (MED28) from Drosophila pseudoobscura pseudoobscura (Fruit fly).